We begin with the raw amino-acid sequence, 324 residues long: Elongation factor P--(R)-beta-lysine ligase (324 aa).

Residue 75–77 (SPE) participates in substrate binding. ATP-binding positions include 99–101 (RNK) and N108. Y117 provides a ligand contact to substrate. Residue 243–244 (EL) coordinates ATP. E250 provides a ligand contact to substrate. G299 provides a ligand contact to ATP.

The protein belongs to the class-II aminoacyl-tRNA synthetase family. EpmA subfamily. In terms of assembly, homodimer.

The enzyme catalyses D-beta-lysine + L-lysyl-[protein] + ATP = N(6)-((3R)-3,6-diaminohexanoyl)-L-lysyl-[protein] + AMP + diphosphate + H(+). Functionally, with EpmB is involved in the beta-lysylation step of the post-translational modification of translation elongation factor P (EF-P). Catalyzes the ATP-dependent activation of (R)-beta-lysine produced by EpmB, forming a lysyl-adenylate, from which the beta-lysyl moiety is then transferred to the epsilon-amino group of a conserved specific lysine residue in EF-P. This chain is Elongation factor P--(R)-beta-lysine ligase, found in Buchnera aphidicola subsp. Acyrthosiphon pisum (strain APS) (Acyrthosiphon pisum symbiotic bacterium).